A 305-amino-acid chain; its full sequence is MSKRLPPLNALRVFDAAARHLSFTRAAEELFVTQAAVSHQIKSLEDFLGLKLFRRRNRSLLLTEEGQSYFLDIKEIFSQLTEATRKLQARSAKGALTVSLLPSFAIHWLVPRLSSFNSAYPGIDVRIQAVDRQEDKLADDVDVAIFYGRGNWPGLRVEKLYAEYLLPVCSPLLLTGEKPLKTPEDLAKHTLLHDASRRDWQTYTRQLGLNHINVQQGPIFSHSAMVLQAAIHGQGVALANNVMAQSEIEAGRLVCPFNDVLVSKNAFYLVCHDSQAELGKIAAFRQWILAKAAAEQEKFRFRYEQ.

The HTH lysR-type domain maps to 6–63 (PPLNALRVFDAAARHLSFTRAAEELFVTQAAVSHQIKSLEDFLGLKLFRRRNRSLLLT). Residues 23 to 42 (FTRAAEELFVTQAAVSHQIK) constitute a DNA-binding region (H-T-H motif).

This sequence belongs to the LysR transcriptional regulatory family.

It localises to the cytoplasm. Its function is as follows. Regulatory protein for the glycine cleavage system operon (gcv). Mediates activation of gcv by glycine and repression by purines. GcvA is negatively autoregulated. Binds to three sites upstream of the gcv promoter. The chain is Glycine cleavage system transcriptional activator (gcvA) from Escherichia coli O157:H7.